Here is a 597-residue protein sequence, read N- to C-terminus: MRTHYCGDVRSHDVGTTVTLFGWVDRRRDHGGVIFLDLRDRSGVVQIVSDPERTPNSYAKAEQLRNEYVVKVTGRVSARPEESLNPRLPTGEVEIYADQIELLNAVRKQLPFQVSTTESESVREDLRLKYRYLDLRRETMAANLQLRHQVVKAMRRYLEDEQNFVEIETPVLTRSTPEGARDYLVPSRVNPGEWFALPQSPQLFKQLLMVAGYDRYYQIARCFRDEDLRADRQPEFTQLDMEMSFMSQEEILELNEALVCHIFKQVKGIELPRPFPRLTYAEAMDRYGSDKPDTRFGLELVNVSDLMKDSGFKVFSGAVASGGLVKVLPIPNGNDLISNVRIKPGGDLFKEATDAGAKGLAYIRVREGGEIDTIGAIKDNLTEAQKAELLQRTGAKPGHLLLFGAGTAAIVNKTLDRLRQVLGRELNLIDPAKINLLWIVEFPMFEWNADEKRLEALHHPFTAPYPEDVQDLKTAQAQAYDLVYNGFEVGGGSLRIYQTELQKQVFETIGLSPEEAQNKFGFLLEAFEYGTPPHGGIAYGLDRLVMLLAGEESIRDVIAFPKTQQARCLLTSAPAEVDLRQLKELHVASTSQPKVNG.

Residue glutamate 178 participates in L-aspartate binding. Residues glutamine 202–lysine 205 form an aspartate region. Arginine 224 provides a ligand contact to L-aspartate. Residues arginine 224 to glutamate 226 and glutamine 233 each bind ATP. Histidine 458 provides a ligand contact to L-aspartate. Glutamate 488 provides a ligand contact to ATP. Arginine 495 contributes to the L-aspartate binding site. Glycine 540–arginine 543 contacts ATP.

This sequence belongs to the class-II aminoacyl-tRNA synthetase family. Type 1 subfamily. Homodimer.

It is found in the cytoplasm. It catalyses the reaction tRNA(Asx) + L-aspartate + ATP = L-aspartyl-tRNA(Asx) + AMP + diphosphate. Its function is as follows. Aspartyl-tRNA synthetase with relaxed tRNA specificity since it is able to aspartylate not only its cognate tRNA(Asp) but also tRNA(Asn). Reaction proceeds in two steps: L-aspartate is first activated by ATP to form Asp-AMP and then transferred to the acceptor end of tRNA(Asp/Asn). In Cyanothece sp. (strain PCC 7425 / ATCC 29141), this protein is Aspartate--tRNA(Asp/Asn) ligase.